The chain runs to 516 residues: uncharacterized protein (516 aa).

5 helical membrane-spanning segments follow: residues Ile-10 to Ile-27, Ile-32 to Ala-54, Ser-64 to Val-83, Leu-95 to Leu-117, and Ala-165 to Leu-187. RCK C-terminal domains are found at residues Lys-208–Glu-291 and Arg-296–Val-376. 4 helical membrane-spanning segments follow: residues Phe-386 to Gly-408, Ile-412 to Leu-430, Gly-443 to Gly-465, and Leu-480 to Leu-502.

Belongs to the AAE transporter (TC 2.A.81) family.

Its subcellular location is the cell membrane. This is an uncharacterized protein from Bradyrhizobium diazoefficiens (strain JCM 10833 / BCRC 13528 / IAM 13628 / NBRC 14792 / USDA 110).